We begin with the raw amino-acid sequence, 360 residues long: MRVFNFSAGPAALPEEVLRQAADEMLDWHGSGMSVMEMSHRGKEFMSIHEAALADLRELLDVPASHRVLFLQGGGIAENAIVPMNLLGSRKTADFVVTGSWSQKSFNEAKKYCTPHLAATGKTDAGFTRAPAFAEWQLSDDPAYVHLCTNETIDGVETFEIPDLGDVPLVADVSSHILSRPMDVAKYGVLFGGAQKNIGMAGVTVVIVREDLLDRALSICPSAFEWKTVAANNSLYNTPPTYAIYIAGLVFQWLKRQGGLGAIEARNIEKAKLLYDTIDGSSFYLNKVEPAVRSRMNVPFFLADESRNEDFLAGAKARGLLQLKGHKSVGGMRASIYNAVPLEGVKALVEYMKDFEQRCA.

An L-glutamate-binding site is contributed by R41. Pyridoxal 5'-phosphate is bound by residues W101, T152, D172, and Q195. Residue K196 is modified to N6-(pyridoxal phosphate)lysine. 237-238 (NT) contributes to the pyridoxal 5'-phosphate binding site.

This sequence belongs to the class-V pyridoxal-phosphate-dependent aminotransferase family. SerC subfamily. As to quaternary structure, homodimer. Pyridoxal 5'-phosphate is required as a cofactor.

The protein localises to the cytoplasm. The catalysed reaction is O-phospho-L-serine + 2-oxoglutarate = 3-phosphooxypyruvate + L-glutamate. It carries out the reaction 4-(phosphooxy)-L-threonine + 2-oxoglutarate = (R)-3-hydroxy-2-oxo-4-phosphooxybutanoate + L-glutamate. It functions in the pathway amino-acid biosynthesis; L-serine biosynthesis; L-serine from 3-phospho-D-glycerate: step 2/3. Its pathway is cofactor biosynthesis; pyridoxine 5'-phosphate biosynthesis; pyridoxine 5'-phosphate from D-erythrose 4-phosphate: step 3/5. Its function is as follows. Catalyzes the reversible conversion of 3-phosphohydroxypyruvate to phosphoserine and of 3-hydroxy-2-oxo-4-phosphonooxybutanoate to phosphohydroxythreonine. This is Phosphoserine aminotransferase from Burkholderia multivorans (strain ATCC 17616 / 249).